Here is a 102-residue protein sequence, read N- to C-terminus: Small ribosomal subunit protein bS6 (102 aa).

Belongs to the bacterial ribosomal protein bS6 family.

Its function is as follows. Binds together with bS18 to 16S ribosomal RNA. The sequence is that of Small ribosomal subunit protein bS6 (rpsF) from Deinococcus radiodurans (strain ATCC 13939 / DSM 20539 / JCM 16871 / CCUG 27074 / LMG 4051 / NBRC 15346 / NCIMB 9279 / VKM B-1422 / R1).